Reading from the N-terminus, the 348-residue chain is Protein RecA (348 aa).

64-71 contributes to the ATP binding site; sequence GPESSGKT.

The protein belongs to the RecA family.

The protein localises to the cytoplasm. In terms of biological role, can catalyze the hydrolysis of ATP in the presence of single-stranded DNA, the ATP-dependent uptake of single-stranded DNA by duplex DNA, and the ATP-dependent hybridization of homologous single-stranded DNAs. It interacts with LexA causing its activation and leading to its autocatalytic cleavage. This is Protein RecA from Blastochloris viridis (Rhodopseudomonas viridis).